Here is a 949-residue protein sequence, read N- to C-terminus: Translation initiation factor IF-2 (949 aa).

3 disordered regions span residues L46–A82, E145–S176, and I188–L361. A compositionally biased stretch (low complexity) spans A152–V162. A compositionally biased stretch (pro residues) spans P163–P172. A compositionally biased stretch (low complexity) spans P263–P276. Over residues S334–H344 the composition is skewed to basic and acidic residues. A tr-type G domain is found at E449–K618. The tract at residues G458–T465 is G1. Residue G458 to T465 participates in GTP binding. A G2 region spans residues G483 to H487. Positions D504–G507 are G3. Residues D504–H508 and N558–D561 contribute to the GTP site. The interval N558–D561 is G4. Positions S594–K596 are G5.

Belongs to the TRAFAC class translation factor GTPase superfamily. Classic translation factor GTPase family. IF-2 subfamily.

It localises to the cytoplasm. In terms of biological role, one of the essential components for the initiation of protein synthesis. Protects formylmethionyl-tRNA from spontaneous hydrolysis and promotes its binding to the 30S ribosomal subunits. Also involved in the hydrolysis of GTP during the formation of the 70S ribosomal complex. The polypeptide is Translation initiation factor IF-2 (Trichlorobacter lovleyi (strain ATCC BAA-1151 / DSM 17278 / SZ) (Geobacter lovleyi)).